The primary structure comprises 117 residues: UPF0295 protein YgzB (117 aa).

The next 2 membrane-spanning stretches (helical) occupy residues 13–33 (TFALSLVFVGFIIMYIGIFFK) and 41–61 (LFMILGLLSIGLSTVVYFWIG).

It belongs to the UPF0295 family.

It is found in the cell membrane. In Bacillus subtilis (strain 168), this protein is UPF0295 protein YgzB (ygzB).